Reading from the N-terminus, the 251-residue chain is Ubiquinone/menaquinone biosynthesis C-methyltransferase UbiE (251 aa).

Residues Thr-74, Asp-95, 123–124 (NA), and Ser-140 each bind S-adenosyl-L-methionine.

Belongs to the class I-like SAM-binding methyltransferase superfamily. MenG/UbiE family.

The enzyme catalyses a 2-demethylmenaquinol + S-adenosyl-L-methionine = a menaquinol + S-adenosyl-L-homocysteine + H(+). It catalyses the reaction a 2-methoxy-6-(all-trans-polyprenyl)benzene-1,4-diol + S-adenosyl-L-methionine = a 5-methoxy-2-methyl-3-(all-trans-polyprenyl)benzene-1,4-diol + S-adenosyl-L-homocysteine + H(+). It functions in the pathway quinol/quinone metabolism; menaquinone biosynthesis; menaquinol from 1,4-dihydroxy-2-naphthoate: step 2/2. The protein operates within cofactor biosynthesis; ubiquinone biosynthesis. In terms of biological role, methyltransferase required for the conversion of demethylmenaquinol (DMKH2) to menaquinol (MKH2) and the conversion of 2-polyprenyl-6-methoxy-1,4-benzoquinol (DDMQH2) to 2-polyprenyl-3-methyl-6-methoxy-1,4-benzoquinol (DMQH2). The polypeptide is Ubiquinone/menaquinone biosynthesis C-methyltransferase UbiE (Escherichia coli O9:H4 (strain HS)).